The chain runs to 322 residues: Ribosomal RNA small subunit methyltransferase H (322 aa).

S-adenosyl-L-methionine is bound by residues 47–49 (GGH), aspartate 67, phenylalanine 93, aspartate 112, and glutamine 119.

The protein belongs to the methyltransferase superfamily. RsmH family.

The protein localises to the cytoplasm. It carries out the reaction cytidine(1402) in 16S rRNA + S-adenosyl-L-methionine = N(4)-methylcytidine(1402) in 16S rRNA + S-adenosyl-L-homocysteine + H(+). Functionally, specifically methylates the N4 position of cytidine in position 1402 (C1402) of 16S rRNA. This chain is Ribosomal RNA small subunit methyltransferase H, found in Stenotrophomonas maltophilia (strain R551-3).